The chain runs to 255 residues: Thiazole synthase (255 aa).

The active-site Schiff-base intermediate with DXP is the lysine 96. 1-deoxy-D-xylulose 5-phosphate-binding positions include glycine 157, 183–184 (AG), and 205–206 (NT).

Belongs to the ThiG family. Homotetramer. Forms heterodimers with either ThiH or ThiS.

Its subcellular location is the cytoplasm. The catalysed reaction is [ThiS sulfur-carrier protein]-C-terminal-Gly-aminoethanethioate + 2-iminoacetate + 1-deoxy-D-xylulose 5-phosphate = [ThiS sulfur-carrier protein]-C-terminal Gly-Gly + 2-[(2R,5Z)-2-carboxy-4-methylthiazol-5(2H)-ylidene]ethyl phosphate + 2 H2O + H(+). It participates in cofactor biosynthesis; thiamine diphosphate biosynthesis. Catalyzes the rearrangement of 1-deoxy-D-xylulose 5-phosphate (DXP) to produce the thiazole phosphate moiety of thiamine. Sulfur is provided by the thiocarboxylate moiety of the carrier protein ThiS. In vitro, sulfur can be provided by H(2)S. The polypeptide is Thiazole synthase (Staphylococcus haemolyticus (strain JCSC1435)).